Here is a 260-residue protein sequence, read N- to C-terminus: Putative serine protease 45 (260 aa).

The region spanning 1 to 234 (MTRHWPWEVS…YTKWIKKQMS (234 aa)) is the Peptidase S1 domain. Cysteines 19 and 35 form a disulfide. The active-site Charge relay system is histidine 34. Residue asparagine 55 is glycosylated (N-linked (GlcNAc...) asparagine). Aspartate 82 functions as the Charge relay system in the catalytic mechanism. 3 cysteine pairs are disulfide-bonded: cysteine 116–cysteine 192, cysteine 151–cysteine 173, and cysteine 182–cysteine 210. Residue serine 186 is the Charge relay system of the active site.

This sequence belongs to the peptidase S1 family.

The chain is Putative serine protease 45 from Homo sapiens (Human).